Reading from the N-terminus, the 344-residue chain is N-acetyl-gamma-glutamyl-phosphate reductase (344 aa).

The active site involves Cys150.

The protein belongs to the NAGSA dehydrogenase family. Type 1 subfamily.

The protein localises to the cytoplasm. The catalysed reaction is N-acetyl-L-glutamate 5-semialdehyde + phosphate + NADP(+) = N-acetyl-L-glutamyl 5-phosphate + NADPH + H(+). It functions in the pathway amino-acid biosynthesis; L-arginine biosynthesis; N(2)-acetyl-L-ornithine from L-glutamate: step 3/4. Functionally, catalyzes the NADPH-dependent reduction of N-acetyl-5-glutamyl phosphate to yield N-acetyl-L-glutamate 5-semialdehyde. The polypeptide is N-acetyl-gamma-glutamyl-phosphate reductase (Pseudomonas putida (strain ATCC 700007 / DSM 6899 / JCM 31910 / BCRC 17059 / LMG 24140 / F1)).